A 330-amino-acid chain; its full sequence is Ketol-acid reductoisomerase (NADP(+)) (330 aa).

The KARI N-terminal Rossmann domain maps to 1 to 181 (MKVLYDDDVN…GLTRAGVIET (181 aa)). NADP(+) contacts are provided by residues 24-27 (YGSQ), Arg-47, Ser-52, and 82-85 (DEIQ). The active site involves His-107. Gly-133 contributes to the NADP(+) binding site. A KARI C-terminal knotted domain is found at 182 to 327 (TYREETETDL…KNLRIACGLQ (146 aa)). Mg(2+) is bound by residues Asp-190, Glu-194, Glu-226, and Glu-230. Ser-251 contributes to the substrate binding site.

Belongs to the ketol-acid reductoisomerase family. Requires Mg(2+) as cofactor.

The enzyme catalyses (2R)-2,3-dihydroxy-3-methylbutanoate + NADP(+) = (2S)-2-acetolactate + NADPH + H(+). It carries out the reaction (2R,3R)-2,3-dihydroxy-3-methylpentanoate + NADP(+) = (S)-2-ethyl-2-hydroxy-3-oxobutanoate + NADPH + H(+). It functions in the pathway amino-acid biosynthesis; L-isoleucine biosynthesis; L-isoleucine from 2-oxobutanoate: step 2/4. Its pathway is amino-acid biosynthesis; L-valine biosynthesis; L-valine from pyruvate: step 2/4. In terms of biological role, involved in the biosynthesis of branched-chain amino acids (BCAA). Catalyzes an alkyl-migration followed by a ketol-acid reduction of (S)-2-acetolactate (S2AL) to yield (R)-2,3-dihydroxy-isovalerate. In the isomerase reaction, S2AL is rearranged via a Mg-dependent methyl migration to produce 3-hydroxy-3-methyl-2-ketobutyrate (HMKB). In the reductase reaction, this 2-ketoacid undergoes a metal-dependent reduction by NADPH to yield (R)-2,3-dihydroxy-isovalerate. The protein is Ketol-acid reductoisomerase (NADP(+)) of Methanosphaera stadtmanae (strain ATCC 43021 / DSM 3091 / JCM 11832 / MCB-3).